A 99-amino-acid chain; its full sequence is Pterin-4-alpha-carbinolamine dehydratase (99 aa).

Belongs to the pterin-4-alpha-carbinolamine dehydratase family.

It carries out the reaction (4aS,6R)-4a-hydroxy-L-erythro-5,6,7,8-tetrahydrobiopterin = (6R)-L-erythro-6,7-dihydrobiopterin + H2O. Its function is as follows. Involved in tetrahydrobiopterin biosynthesis. In Dictyostelium discoideum (Social amoeba), this protein is Pterin-4-alpha-carbinolamine dehydratase (pcbd).